Here is a 253-residue protein sequence, read N- to C-terminus: LexA repressor (253 aa).

The disordered stretch occupies residues 1 to 33; it reads MTSQGRGTRRGGARGNVRAFPENPADAAGLTPR. Residues 54–74 constitute a DNA-binding region (H-T-H motif); sequence VREIGEAVGLTSTSSVAHQLK. Residues serine 177 and lysine 214 each act as for autocatalytic cleavage activity in the active site.

The protein belongs to the peptidase S24 family. In terms of assembly, homodimer.

The catalysed reaction is Hydrolysis of Ala-|-Gly bond in repressor LexA.. In terms of biological role, represses a number of genes involved in the response to DNA damage (SOS response), including recA and lexA. In the presence of single-stranded DNA, RecA interacts with LexA causing an autocatalytic cleavage which disrupts the DNA-binding part of LexA, leading to derepression of the SOS regulon and eventually DNA repair. This chain is LexA repressor, found in Frankia alni (strain DSM 45986 / CECT 9034 / ACN14a).